We begin with the raw amino-acid sequence, 228 residues long: NAD(P)H-hydrate epimerase (228 aa).

A YjeF N-terminal domain is found at 9 to 209 (VRAVERLAHR…LLGLTPAFLA (201 aa)). Position 53–57 (53–57 (NNGGD)) interacts with (6S)-NADPHX. The K(+) site is built by N54 and D115. (6S)-NADPHX contacts are provided by residues 119–125 (GIGLARP) and D148. S151 serves as a coordination point for K(+).

Belongs to the NnrE/AIBP family. It depends on K(+) as a cofactor.

The catalysed reaction is (6R)-NADHX = (6S)-NADHX. The enzyme catalyses (6R)-NADPHX = (6S)-NADPHX. In terms of biological role, catalyzes the epimerization of the S- and R-forms of NAD(P)HX, a damaged form of NAD(P)H that is a result of enzymatic or heat-dependent hydration. This is a prerequisite for the S-specific NAD(P)H-hydrate dehydratase to allow the repair of both epimers of NAD(P)HX. The chain is NAD(P)H-hydrate epimerase from Bordetella pertussis (strain CS).